A 440-amino-acid chain; its full sequence is UDP-N-acetylmuramoylalanine--D-glutamate ligase (440 aa).

An ATP-binding site is contributed by 115 to 121 (GSNGKST).

It belongs to the MurCDEF family.

It is found in the cytoplasm. It catalyses the reaction UDP-N-acetyl-alpha-D-muramoyl-L-alanine + D-glutamate + ATP = UDP-N-acetyl-alpha-D-muramoyl-L-alanyl-D-glutamate + ADP + phosphate + H(+). Its pathway is cell wall biogenesis; peptidoglycan biosynthesis. In terms of biological role, cell wall formation. Catalyzes the addition of glutamate to the nucleotide precursor UDP-N-acetylmuramoyl-L-alanine (UMA). The protein is UDP-N-acetylmuramoylalanine--D-glutamate ligase of Aliivibrio fischeri (strain ATCC 700601 / ES114) (Vibrio fischeri).